The following is a 158-amino-acid chain: 2-C-methyl-D-erythritol 2,4-cyclodiphosphate synthase (158 aa).

Positions 9 and 11 each coordinate a divalent metal cation. Residues 9–11 and 35–36 each bind 4-CDP-2-C-methyl-D-erythritol 2-phosphate; these read DVH and HS. His-43 is an a divalent metal cation binding site. Residues 57–59, 62–66, 101–107, 133–136, Phe-140, and Arg-143 each bind 4-CDP-2-C-methyl-D-erythritol 2-phosphate; these read DIG, FPDTD, AQKPKMA, and TTTE.

This sequence belongs to the IspF family. As to quaternary structure, homotrimer. The cofactor is a divalent metal cation.

It catalyses the reaction 4-CDP-2-C-methyl-D-erythritol 2-phosphate = 2-C-methyl-D-erythritol 2,4-cyclic diphosphate + CMP. It functions in the pathway isoprenoid biosynthesis; isopentenyl diphosphate biosynthesis via DXP pathway; isopentenyl diphosphate from 1-deoxy-D-xylulose 5-phosphate: step 4/6. Its function is as follows. Involved in the biosynthesis of isopentenyl diphosphate (IPP) and dimethylallyl diphosphate (DMAPP), two major building blocks of isoprenoid compounds. Catalyzes the conversion of 4-diphosphocytidyl-2-C-methyl-D-erythritol 2-phosphate (CDP-ME2P) to 2-C-methyl-D-erythritol 2,4-cyclodiphosphate (ME-CPP) with a corresponding release of cytidine 5-monophosphate (CMP). The protein is 2-C-methyl-D-erythritol 2,4-cyclodiphosphate synthase of Bacillus cereus (strain B4264).